The chain runs to 156 residues: Small ribosomal subunit protein uS10m (156 aa).

Belongs to the universal ribosomal protein uS10 family.

The protein resides in the mitochondrion. Functionally, ribosomal protein required for normal mitochondrial function and normal larval development. Thought to have a role in insulin/IGF signaling. The polypeptide is Small ribosomal subunit protein uS10m (mrps-10) (Caenorhabditis elegans).